A 259-amino-acid polypeptide reads, in one-letter code: NAD kinase (259 aa).

Residue aspartate 43 is the Proton acceptor of the active site. Residues 43–44 (DG), 111–112 (NE), and arginine 136 each bind NAD(+).

The protein belongs to the NAD kinase family. A divalent metal cation serves as cofactor.

Its subcellular location is the cytoplasm. The catalysed reaction is NAD(+) + ATP = ADP + NADP(+) + H(+). Its function is as follows. Involved in the regulation of the intracellular balance of NAD and NADP, and is a key enzyme in the biosynthesis of NADP. Catalyzes specifically the phosphorylation on 2'-hydroxyl of the adenosine moiety of NAD to yield NADP. The chain is NAD kinase from Mycoplasma genitalium (strain ATCC 33530 / DSM 19775 / NCTC 10195 / G37) (Mycoplasmoides genitalium).